A 494-amino-acid chain; its full sequence is Probable malate:quinone oxidoreductase (494 aa).

This sequence belongs to the MQO family. FAD serves as cofactor.

It carries out the reaction (S)-malate + a quinone = a quinol + oxaloacetate. It participates in carbohydrate metabolism; tricarboxylic acid cycle; oxaloacetate from (S)-malate (quinone route): step 1/1. This Kocuria rhizophila (strain ATCC 9341 / DSM 348 / NBRC 103217 / DC2201) protein is Probable malate:quinone oxidoreductase.